The sequence spans 403 residues: 8-amino-7-oxononanoate synthase (403 aa).

Arginine 22 contributes to the substrate binding site. Position 109–110 (glycine 109–phenylalanine 110) interacts with pyridoxal 5'-phosphate. Histidine 134 provides a ligand contact to substrate. Residues serine 178, histidine 206, and threonine 232 each contribute to the pyridoxal 5'-phosphate site. An N6-(pyridoxal phosphate)lysine modification is found at lysine 235. Threonine 348 serves as a coordination point for substrate. The tract at residues serine 383 to glutamine 403 is disordered. Residues aspartate 385–serine 394 show a composition bias toward polar residues.

The protein belongs to the class-II pyridoxal-phosphate-dependent aminotransferase family. BioF subfamily. Homodimer. Requires pyridoxal 5'-phosphate as cofactor.

It carries out the reaction 6-carboxyhexanoyl-[ACP] + L-alanine + H(+) = (8S)-8-amino-7-oxononanoate + holo-[ACP] + CO2. It participates in cofactor biosynthesis; biotin biosynthesis. Functionally, catalyzes the decarboxylative condensation of pimeloyl-[acyl-carrier protein] and L-alanine to produce 8-amino-7-oxononanoate (AON), [acyl-carrier protein], and carbon dioxide. This is 8-amino-7-oxononanoate synthase from Vibrio atlanticus (strain LGP32) (Vibrio splendidus (strain Mel32)).